Here is a 333-residue protein sequence, read N- to C-terminus: Nucleoid-associated protein VV1_3120 (333 aa).

This sequence belongs to the YejK family.

It localises to the cytoplasm. The protein resides in the nucleoid. The protein is Nucleoid-associated protein VV1_3120 of Vibrio vulnificus (strain CMCP6).